We begin with the raw amino-acid sequence, 232 residues long: Ribonuclease 3 (232 aa).

Residues 10–135 (ALKIYEATGY…LIGAMYMDGG (126 aa)) enclose the RNase III domain. E48 is a Mg(2+) binding site. D52 is an active-site residue. Positions 121 and 124 each coordinate Mg(2+). E124 is an active-site residue. In terms of domain architecture, DRBM spans 161-230 (DPKTALQEWV…AKLMLKKITE (70 aa)).

This sequence belongs to the ribonuclease III family. As to quaternary structure, homodimer. The cofactor is Mg(2+).

The protein resides in the cytoplasm. The catalysed reaction is Endonucleolytic cleavage to 5'-phosphomonoester.. Digests double-stranded RNA. Involved in the processing of primary rRNA transcript to yield the immediate precursors to the large and small rRNAs (23S and 16S). Processes some mRNAs, and tRNAs when they are encoded in the rRNA operon. Processes pre-crRNA and tracrRNA of type II CRISPR loci if present in the organism. The polypeptide is Ribonuclease 3 (Anaplasma marginale (strain Florida)).